The chain runs to 609 residues: MSSTKQWDISKALTVATLFYFFHNVGKFCLMPFLTLYFRQLGLGAPLVGIIFGFKHAVHLLWAPLCSFLAKNHHKQRFFIMTSLLLSAGVGSLFAYYPPLDKNIVSLFCNTSMPWKEQLNPPIDISVSVDENLNTTYAAPTDHQTTTGALNTLPSSVGKLATDPAMTSLDLEITTHQRFTDQFPVTSNTILEHQTKNVLGSGKAQKVMSSKSAASNSKQRSSLNNHTSPYATHPNVSHHPSIHERKVRDIGIDFTDNSLDPQHKIFLIVLVLVIIWEILAAPLEWIADDSLYEYLDFVDATDRHGKLWIWGYLGASMGSIFITFLVDNLNCFVIYDIPRVFFHFFCYGGFLIGTLFLSTLYPIHVSKKTEHSNKTVKALGFLGSDGRIVLTALTVFLLGAVGSTTQNFLFWQMQDVGSSELYMGLSIAVGLLSELTLYFFRNKLLKIFTFKWMVALGLFSLGVQCLYYSFLWAPWSVLAIQILNAFSSGVIWWAINSQVVDLASPGTERSLQLALRWLAYGCGSSTGSFASGFIISRFSLAVLYQACCITLLLWIIIFLLVQPKLPNTKKINYSRLLAADNSDMSDSDEEQDRDWLVTAMKDENSNRNW.

The next 2 membrane-spanning stretches (helical) occupy residues 41 to 61 (LGLGAPLVGIIFGFKHAVHLL) and 78 to 98 (FFIMTSLLLSAGVGSLFAYYP). The disordered stretch occupies residues 201 to 241 (SGKAQKVMSSKSAASNSKQRSSLNNHTSPYATHPNVSHHPS). Residues 207 to 230 (VMSSKSAASNSKQRSSLNNHTSPY) are compositionally biased toward polar residues. Helical transmembrane passes span 265-285 (IFLIVLVLVIIWEILAAPLEW), 307-327 (LWIWGYLGASMGSIFITFLVD), 340-360 (VFFHFFCYGGFLIGTLFLSTL), 388-408 (IVLTALTVFLLGAVGSTTQNF), 420-440 (ELYMGLSIAVGLLSELTLYFF), 452-472 (WMVALGLFSLGVQCLYYSFLW), 475-495 (WSVLAIQILNAFSSGVIWWAI), 513-535 (LALRWLAYGCGSSTGSFASGFII), and 541-561 (AVLYQACCITLLLWIIIFLLV).

It belongs to the major facilitator superfamily. MFSD6 family.

It localises to the membrane. This Xenopus laevis (African clawed frog) protein is Major facilitator superfamily domain-containing protein 6-like protein A (mfsd6l-a).